The sequence spans 417 residues: NADH-quinone oxidoreductase subunit D (417 aa).

Belongs to the complex I 49 kDa subunit family. As to quaternary structure, NDH-1 is composed of 14 different subunits. Subunits NuoB, C, D, E, F, and G constitute the peripheral sector of the complex.

It is found in the cell inner membrane. It catalyses the reaction a quinone + NADH + 5 H(+)(in) = a quinol + NAD(+) + 4 H(+)(out). Functionally, NDH-1 shuttles electrons from NADH, via FMN and iron-sulfur (Fe-S) centers, to quinones in the respiratory chain. The immediate electron acceptor for the enzyme in this species is believed to be ubiquinone. Couples the redox reaction to proton translocation (for every two electrons transferred, four hydrogen ions are translocated across the cytoplasmic membrane), and thus conserves the redox energy in a proton gradient. The protein is NADH-quinone oxidoreductase subunit D of Verminephrobacter eiseniae (strain EF01-2).